The following is a 507-amino-acid chain: Histidine ammonia-lyase (507 aa).

The 5-imidazolinone (Ala-Gly) cross-link spans 141-143; the sequence is ASG. Ser-142 carries the 2,3-didehydroalanine (Ser) modification.

It belongs to the PAL/histidase family. Contains an active site 4-methylidene-imidazol-5-one (MIO), which is formed autocatalytically by cyclization and dehydration of residues Ala-Ser-Gly.

It is found in the cytoplasm. The enzyme catalyses L-histidine = trans-urocanate + NH4(+). The protein operates within amino-acid degradation; L-histidine degradation into L-glutamate; N-formimidoyl-L-glutamate from L-histidine: step 1/3. This is Histidine ammonia-lyase from Burkholderia orbicola (strain MC0-3).